A 344-amino-acid polypeptide reads, in one-letter code: UDP-3-O-acylglucosamine N-acyltransferase (344 aa).

H244 (proton acceptor) is an active-site residue.

Belongs to the transferase hexapeptide repeat family. LpxD subfamily. In terms of assembly, homotrimer.

The enzyme catalyses a UDP-3-O-[(3R)-3-hydroxyacyl]-alpha-D-glucosamine + a (3R)-hydroxyacyl-[ACP] = a UDP-2-N,3-O-bis[(3R)-3-hydroxyacyl]-alpha-D-glucosamine + holo-[ACP] + H(+). It functions in the pathway bacterial outer membrane biogenesis; LPS lipid A biosynthesis. Catalyzes the N-acylation of UDP-3-O-acylglucosamine using 3-hydroxyacyl-ACP as the acyl donor. Is involved in the biosynthesis of lipid A, a phosphorylated glycolipid that anchors the lipopolysaccharide to the outer membrane of the cell. This Pseudoalteromonas atlantica (strain T6c / ATCC BAA-1087) protein is UDP-3-O-acylglucosamine N-acyltransferase.